We begin with the raw amino-acid sequence, 199 residues long: Large ribosomal subunit protein bL25 (199 aa).

Residues 1-21 (MNIEKTLSVQKREGYGKGPSG) form a disordered region.

It belongs to the bacterial ribosomal protein bL25 family. CTC subfamily. In terms of assembly, part of the 50S ribosomal subunit; part of the 5S rRNA/L5/L18/L25 subcomplex. Contacts the 5S rRNA. Binds to the 5S rRNA independently of L5 and L18.

In terms of biological role, this is one of the proteins that binds to the 5S RNA in the ribosome where it forms part of the central protuberance. The protein is Large ribosomal subunit protein bL25 of Desulfovibrio desulfuricans (strain ATCC 27774 / DSM 6949 / MB).